Here is a 506-residue protein sequence, read N- to C-terminus: (+)-vincadifformine 19-hydroxylase (506 aa).

Residues 1-4 are Lumenal-facing; sequence MELD. The helical transmembrane segment at 5-25 threads the bilayer; sequence ECSPSIFIISFIFIAISIAIL. Over 26-506 the chain is Cytoplasmic; the sequence is RRIRPKKTKA…DLHLIPTSYM (481 aa). Cys450 is a heme binding site.

This sequence belongs to the cytochrome P450 family. Heme serves as cofactor. Accumulates progressively in roots.

It is found in the endoplasmic reticulum membrane. The enzyme catalyses (+)-vincadifformine + reduced [NADPH--hemoprotein reductase] + O2 = (+)-minovincinine + oxidized [NADPH--hemoprotein reductase] + H2O + H(+). The protein operates within alkaloid biosynthesis. The enantiomer (-)-vincadifformine acts as a competitive inhibitor. Component of the monoterpenoid indole alkaloids (MIAs, e.g. echitovenine, tabersonine, lochnericine, 19-hydroxytabersonine and horhammericine) biosynthetic pathway; MIAs are used in cancer treatment and other medical applications. Cytochrome P450 catalyzing the hydroxylation of (+)-vincadifformine to (+)-minovincinine. The polypeptide is (+)-vincadifformine 19-hydroxylase (Catharanthus roseus (Madagascar periwinkle)).